Consider the following 450-residue polypeptide: Tubulin alpha chain (450 aa).

GTP-binding residues include glutamine 11, glutamate 71, serine 140, glycine 144, threonine 145, threonine 179, asparagine 206, and asparagine 228. Glutamate 71 contacts Mg(2+). Glutamate 254 is an active-site residue.

Belongs to the tubulin family. As to quaternary structure, dimer of alpha and beta chains. A typical microtubule is a hollow water-filled tube with an outer diameter of 25 nm and an inner diameter of 15 nM. Alpha-beta heterodimers associate head-to-tail to form protofilaments running lengthwise along the microtubule wall with the beta-tubulin subunit facing the microtubule plus end conferring a structural polarity. Microtubules usually have 13 protofilaments but different protofilament numbers can be found in some organisms and specialized cells. It depends on Mg(2+) as a cofactor.

It localises to the cytoplasm. The protein localises to the cytoskeleton. It catalyses the reaction GTP + H2O = GDP + phosphate + H(+). Functionally, tubulin is the major constituent of microtubules, a cylinder consisting of laterally associated linear protofilaments composed of alpha- and beta-tubulin heterodimers. Microtubules grow by the addition of GTP-tubulin dimers to the microtubule end, where a stabilizing cap forms. Below the cap, tubulin dimers are in GDP-bound state, owing to GTPase activity of alpha-tubulin. This is Tubulin alpha chain from Zymoseptoria tritici (Speckled leaf blotch fungus).